Reading from the N-terminus, the 201-residue chain is Retinol-binding protein 4 (201 aa).

The N-terminal stretch at Met-1–Ala-18 is a signal peptide. 3 disulfides stabilise this stretch: Cys-22–Cys-178, Cys-88–Cys-192, and Cys-138–Cys-147. Gln-116 contributes to the substrate binding site. Arg-139 is modified (omega-N-methylarginine).

It belongs to the calycin superfamily. Lipocalin family. In terms of assembly, interacts with TTR. Interaction with TTR prevents its loss by filtration through the kidney glomeruli. Interacts with STRA6. Detected in blood plasma (at protein level).

Its subcellular location is the secreted. In terms of biological role, retinol-binding protein that mediates retinol transport in blood plasma. Delivers retinol from the liver stores to the peripheral tissues. Transfers the bound all-trans retinol to STRA6, that then facilitates retinol transport across the cell membrane. This chain is Retinol-binding protein 4 (Rbp4), found in Rattus norvegicus (Rat).